Consider the following 358-residue polypeptide: Peptide chain release factor 1 (358 aa).

N5-methylglutamine is present on Q236.

Belongs to the prokaryotic/mitochondrial release factor family. Post-translationally, methylated by PrmC. Methylation increases the termination efficiency of RF1.

Its subcellular location is the cytoplasm. Peptide chain release factor 1 directs the termination of translation in response to the peptide chain termination codons UAG and UAA. This Corynebacterium aurimucosum (strain ATCC 700975 / DSM 44827 / CIP 107346 / CN-1) (Corynebacterium nigricans) protein is Peptide chain release factor 1.